The primary structure comprises 309 residues: Calponin-2 (309 aa).

Ser2 carries the N-acetylserine modification. Residues Lys8 and Lys25 each carry the N6-acetyllysine modification. The Calponin-homology (CH) domain occupies Pro28–Lys132. The residue at position 138 (Ser138) is a Phosphoserine. 3 Calponin-like repeats span residues Ile166–Tyr191, Ile206–Tyr231, and Met245–Tyr269. A disordered region spans residues Ala283 to Tyr309.

The protein belongs to the calponin family. In terms of tissue distribution, heart and smooth muscle.

Thin filament-associated protein that is implicated in the regulation and modulation of smooth muscle contraction. It is capable of binding to actin, calmodulin and tropomyosin. The interaction of calponin with actin inhibits the actomyosin Mg-ATPase activity. The polypeptide is Calponin-2 (CNN2) (Homo sapiens (Human)).